The following is a 164-amino-acid chain: NADH-quinone oxidoreductase subunit C (164 aa).

This sequence belongs to the complex I 30 kDa subunit family. As to quaternary structure, NDH-1 is composed of 14 different subunits. Subunits NuoB, C, D, E, F, and G constitute the peripheral sector of the complex.

It localises to the cell inner membrane. The enzyme catalyses a quinone + NADH + 5 H(+)(in) = a quinol + NAD(+) + 4 H(+)(out). NDH-1 shuttles electrons from NADH, via FMN and iron-sulfur (Fe-S) centers, to quinones in the respiratory chain. The immediate electron acceptor for the enzyme in this species is believed to be ubiquinone. Couples the redox reaction to proton translocation (for every two electrons transferred, four hydrogen ions are translocated across the cytoplasmic membrane), and thus conserves the redox energy in a proton gradient. In Geotalea uraniireducens (strain Rf4) (Geobacter uraniireducens), this protein is NADH-quinone oxidoreductase subunit C.